A 35-amino-acid chain; its full sequence is MSDIN-like toxin proprotein 6 (35 aa).

A propeptide spanning residues 1 to 10 (MSDINTTRLP) is cleaved from the precursor. Residues 11 to 18 (FVFVASPP) constitute a cross-link (cyclopeptide (Phe-Pro)). Residues 19-35 (CVGDDIAMVLTRGENLC) constitute a propeptide that is removed on maturation.

It belongs to the MSDIN fungal toxin family. In terms of processing, processed by the macrocyclase-peptidase enzyme POPB to yield a toxic cyclic octapeptide. POPB first removes 10 residues from the N-terminus. Conformational trapping of the remaining peptide forces the enzyme to release this intermediate rather than proceed to macrocyclization. The enzyme rebinds the remaining peptide in a different conformation and catalyzes macrocyclization of the N-terminal 8 residues. As to expression, expressed in basidiocarps.

Its function is as follows. Probable toxin that belongs to the MSDIN-like toxin family responsible for a large number of food poisoning cases and deaths. The sequence is that of MSDIN-like toxin proprotein 6 from Amanita exitialis (Guangzhou destroying angel).